The sequence spans 192 residues: Imidazole glycerol phosphate synthase subunit HisH (192 aa).

The Glutamine amidotransferase type-1 domain maps to 1 to 192; it reads MIVIVDYGLG…QAIQGGFIND (192 aa). Catalysis depends on Cys-77, which acts as the Nucleophile. Catalysis depends on residues His-169 and Glu-171.

Heterodimer of HisH and HisF.

The protein localises to the cytoplasm. It catalyses the reaction 5-[(5-phospho-1-deoxy-D-ribulos-1-ylimino)methylamino]-1-(5-phospho-beta-D-ribosyl)imidazole-4-carboxamide + L-glutamine = D-erythro-1-(imidazol-4-yl)glycerol 3-phosphate + 5-amino-1-(5-phospho-beta-D-ribosyl)imidazole-4-carboxamide + L-glutamate + H(+). The catalysed reaction is L-glutamine + H2O = L-glutamate + NH4(+). The protein operates within amino-acid biosynthesis; L-histidine biosynthesis; L-histidine from 5-phospho-alpha-D-ribose 1-diphosphate: step 5/9. In terms of biological role, IGPS catalyzes the conversion of PRFAR and glutamine to IGP, AICAR and glutamate. The HisH subunit catalyzes the hydrolysis of glutamine to glutamate and ammonia as part of the synthesis of IGP and AICAR. The resulting ammonia molecule is channeled to the active site of HisF. In Staphylococcus aureus (strain bovine RF122 / ET3-1), this protein is Imidazole glycerol phosphate synthase subunit HisH.